We begin with the raw amino-acid sequence, 360 residues long: Peptide chain release factor 1 (360 aa).

Gln235 is modified (N5-methylglutamine).

The protein belongs to the prokaryotic/mitochondrial release factor family. Methylated by PrmC. Methylation increases the termination efficiency of RF1.

The protein localises to the cytoplasm. Its function is as follows. Peptide chain release factor 1 directs the termination of translation in response to the peptide chain termination codons UAG and UAA. The chain is Peptide chain release factor 1 from Burkholderia ambifaria (strain MC40-6).